The following is a 503-amino-acid chain: Maturase K (503 aa).

Belongs to the intron maturase 2 family. MatK subfamily.

The protein resides in the plastid. The protein localises to the chloroplast. Usually encoded in the trnK tRNA gene intron. Probably assists in splicing its own and other chloroplast group II introns. This chain is Maturase K, found in Cercocarpus betuloides (Mountain mahogany).